The chain runs to 476 residues: Glycogen synthase (476 aa).

ADP-alpha-D-glucose is bound at residue K15.

The protein belongs to the glycosyltransferase 1 family. Bacterial/plant glycogen synthase subfamily.

It catalyses the reaction [(1-&gt;4)-alpha-D-glucosyl](n) + ADP-alpha-D-glucose = [(1-&gt;4)-alpha-D-glucosyl](n+1) + ADP + H(+). It functions in the pathway glycan biosynthesis; glycogen biosynthesis. Functionally, synthesizes alpha-1,4-glucan chains using ADP-glucose. This Streptococcus sanguinis (strain SK36) protein is Glycogen synthase.